Consider the following 2527-residue polypeptide: Neurogenic locus notch homolog protein 1 (2527 aa).

A signal peptide spans 1 to 36 (MGRSDSRAGALLEGGCEQNIDPRRAAHCHHPRLATS). Topologically, residues 37–1741 (SLRCSQPSGT…VEPPLPSQLH (1705 aa)) are extracellular. 33 cysteine pairs are disulfide-bonded: Cys40/Cys53, Cys47/Cys62, Cys64/Cys73, Cys79/Cys90, Cys84/Cys103, Cys105/Cys114, Cys122/Cys133, Cys127/Cys143, Cys145/Cys154, Cys160/Cys171, Cys165/Cys180, Cys182/Cys191, Cys198/Cys211, Cys205/Cys220, Cys222/Cys231, Cys238/Cys249, Cys243/Cys259, Cys261/Cys270, Cys277/Cys288, Cys282/Cys297, Cys299/Cys308, Cys315/Cys328, Cys322/Cys337, Cys339/Cys348, Cys355/Cys366, Cys360/Cys375, Cys377/Cys386, Cys392/Cys403, Cys397/Cys414, Cys416/Cys425, Cys432/Cys445, Cys439/Cys454, and Cys456/Cys465. N-linked (GlcNAc...) asparagine glycosylation is present at Asn57. 3 consecutive EGF-like domains span residues 75-115 (DPNP…PLCL), 118-155 (LDNACLANPCRNGGTCDLLTLTEYKCRCPPGWSGKSCQ), and 156-192 (QADPCASNPCANGGQCLPFESSYICGCPPGFHGPTCR). Ser81 carries O-linked (Glc...) serine glycosylation. Thr89 is a glycosylation site (O-linked (Fuc...) threonine). Thr132 is a glycosylation site (O-linked (Fuc...) threonine). An O-linked (Glc...) serine glycan is attached at Ser162. The EGF-like 4; calcium-binding domain maps to 194-232 (DVNECSQNPGLCRHGGTCHNEIGSYRCVCRATHTGPHCE). The O-linked (Fuc...) threonine glycan is linked to Thr210. An EGF-like 5 domain is found at 234–271 (PYVPCSPSPCQNGGTCRPTGDTTHECACLPGFAGQNCE). An O-linked (Fuc...) threonine; alternate glycan is attached at Thr248. Thr248 is a glycosylation site (O-linked (GalNAc...) threonine; alternate). The EGF-like 6; calcium-binding domain occupies 273-309 (NVDDCPGNNCKNGGACVDGVNTYNCRCPPEWTGQYCT). Residues 311-349 (DVDECQLMPNACQNGGTCHNTHGGYNCVCVNGWTGEDCS) form the EGF-like 7; calcium-binding domain. Thr327 carries an O-linked (Fuc...) threonine glycan. Residues 351–387 (NIDDCASAACFQGATCHDRVASFYCECPHGRTGLLCH) form the EGF-like 8; calcium-binding domain. Residue Ser357 is glycosylated (O-linked (Glc...) serine). A glycan (O-linked (Fuc...) threonine) is linked at Thr365. The EGF-like 9 domain occupies 388-426 (LNDACISNPCNEGSNCDTNPVNGKAICTCPSGYTGPACS). O-linked (Glc...) serine glycosylation occurs at Ser394. The region spanning 428–466 (DVDECALGANPCEHAGKCLNTLGSFECQCLQGYTGPRCE) is the EGF-like 10; calcium-binding domain. The tract at residues 436-437 (AN) is interaction with DLL4. Thr448 and Ser451 together coordinate Ca(2+). Ser451 is a glycosylation site (O-linked (Glc...) serine). The interval 464-468 (RCEID) is interaction with DLL4. Ca(2+) is bound by residues Asp468, Val469, and Glu471. An EGF-like 11; calcium-binding domain is found at 468–504 (DVNECISNPCQNDATCLDQIGEFQCICMPGYEGVYCE). Intrachain disulfides connect Cys472–Cys483, Cys477–Cys492, and Cys494–Cys503. Residue Ser474 is glycosylated (O-linked (Glc...) serine). Thr482 carries an O-linked (Fuc...) threonine glycan. Residues Asp485 and Gln486 each contribute to the Ca(2+) site. Residues Asn506, Thr507, and Glu509 each coordinate Ca(2+). The EGF-like 12; calcium-binding domain occupies 506–542 (NTDECASSPCLHNGHCMDKINEFLCQCPKGFSGHLCQ). 28 cysteine pairs are disulfide-bonded: Cys510–Cys521, Cys515–Cys530, Cys532–Cys541, Cys548–Cys559, Cys553–Cys568, Cys570–Cys579, Cys586–Cys596, Cys591–Cys605, Cys607–Cys616, Cys623–Cys634, Cys628–Cys643, Cys645–Cys654, Cys661–Cys671, Cys666–Cys680, Cys682–Cys691, Cys698–Cys709, Cys703–Cys718, Cys720–Cys729, Cys736–Cys746, Cys741–Cys755, Cys757–Cys766, Cys773–Cys784, Cys778–Cys793, Cys795–Cys804, Cys811–Cys822, Cys816–Cys831, Cys833–Cys842, and Cys849–Cys860. The O-linked (Glc...) serine glycan is linked to Ser512. Residues Asp523 and Lys524 each contribute to the Ca(2+) site. In terms of domain architecture, EGF-like 13; calcium-binding spans 544 to 580 (DVDECASTPCKNGAKCLDGPNTYTCVCTEGYTGTHCE). Ser550 carries O-linked (Glc...) serine glycosylation. An EGF-like 14; calcium-binding domain is found at 582 to 617 (DIDECDPDPCHYGFCKDGVATFTCLCQPGYTGHHCE). The EGF-like 15; calcium-binding domain occupies 619–655 (NINECHSQPCRHGGTCQDRDNSYLCLCLKGTTGPNCE). Ser625 carries an O-linked (Glc...) serine glycan. An O-linked (Fuc...) threonine glycan is attached at Thr633. The EGF-like 16; calcium-binding domain occupies 657–692 (NLDDCASNPCDSGTCLDKIDGYECACEPGYTGSMCN). Residue Ser663 is glycosylated (O-linked (Glc...) serine). One can recognise an EGF-like 17; calcium-binding domain in the interval 694 to 730 (NIDECAGSPCHNGGTCEDGIAGFTCRCPEGYHDPTCL). O-linked (Fuc...) threonine glycosylation is present at Thr708. An EGF-like 18; calcium-binding domain is found at 732-767 (EVNECNSNPCIHGACRDGLNGYKCDCAPGWSGTNCD). An O-linked (Glc...) serine glycan is attached at Ser738. The region spanning 769 to 805 (NNNECESNPCVNGGTCKDMTSGYVCTCREGFSGPNCQ) is the EGF-like 19 domain. An O-linked (Glc...) serine glycan is attached at Ser775. An O-linked (Fuc...) threonine glycan is attached at Thr783. The O-linked (GlcNAc) serine glycan is linked to Ser800. Residues 807–843 (NINECASNPCLNQGTCIDDVAGYKCNCPLPYTGATCE) enclose the EGF-like 20; calcium-binding domain. O-linked (Glc...) serine glycosylation is present at Ser813. Thr821 carries an O-linked (Fuc...) threonine glycan. The 39-residue stretch at 845–883 (VLAPCATSPCKNSGVCKESEDYESFSCVCPTGWQGQTCE) folds into the EGF-like 21 domain. The EGF-like 22; calcium-binding domain occupies 885–921 (DINECVKSPCRHGASCQNTNGSYRCLCQAGYTGRNCE). Asn904 carries an N-linked (GlcNAc...) asparagine glycan. O-linked (GlcNAc) threonine glycosylation is present at Thr916. Positions 923–959 (DIDDCRPNPCHNGGSCTDGINMAFCDCLPGFQGAFCE) constitute an EGF-like 23 domain. O-linked (Fuc) serine glycosylation is present at Ser937. The EGF-like 24; calcium-binding domain maps to 961–997 (DINECASNPCRNGANCTDCVDSYTCTCPAGFNGIHCE). Ser967 is a glycosylation site (O-linked (Glc...) serine). N-linked (GlcNAc...) asparagine glycosylation is present at Asn975. 5 EGF-like domains span residues 999 to 1035 (NTPDCTESSCFNGGTCVDGINSFTCLCPPGFTGSYCQ), 1037 to 1073 (DVNECDSRPCLHGGTCQDSYGTYKCTCPQGYTGLNCQ), 1075 to 1111 (LVHWCDSAPCKNGGKCWQTNTQYHCECRSGWTGFNCD), 1113 to 1159 (LSVS…SYCE), and 1161 to 1197 (EVDECSPNPCQNGATCTDYLGGFSCKCVAGYHGSNCS). Thr1013 is a glycosylation site (O-linked (Fuc...) threonine). Ser1043 is a glycosylation site (O-linked (Glc...) serine). Thr1051 carries an O-linked (Fuc...) threonine glycan. A glycan (O-linked (Glc...) serine) is linked at Ser1081. Cys1117 and Cys1138 are disulfide-bonded. Residue Thr1175 is glycosylated (O-linked (Fuc...) threonine). An N-linked (GlcNAc...) asparagine glycan is attached at Asn1195. In terms of domain architecture, EGF-like 30; calcium-binding spans 1199–1235 (EINECLSQPCQNGGTCIDLTNTYKCSCPRGTQGVHCE). O-linked (Glc...) serine glycosylation is present at Ser1205. O-linked (Fuc...) threonine glycosylation is present at Thr1213. In terms of domain architecture, EGF-like 31; calcium-binding spans 1237–1281 (NVDDCHPHLDPASRSPKCFNNGTCVDQVGGYSCTCPPGFVGERCE). Residue Asn1257 is glycosylated (N-linked (GlcNAc...) asparagine). EGF-like domains follow at residues 1283 to 1321 (DINECLSNPCDPRGTQDCVQRVNDFHCECRAGHTGRRCE), 1323 to 1362 (VINGCRGKPCKNGGVCAVASNTARGFICRCPAGFEGATCE), 1364 to 1400 (DARTCGSLRCLNGGTCISGPRSPTCLCLGSFTGPECQ), and 1403 to 1442 (ASSPCVGSNPCYNQGTCEPTSESPFYRCLCPAKFNGLLCH). An O-linked (Glc...) serine glycan is attached at Ser1289. O-linked (Fuc...) threonine glycosylation is present at Thr1378. O-linked (GlcNAc...) threonine glycosylation is present at Thr1395. Thr1418 carries O-linked (Fuc...) threonine; alternate glycosylation. Thr1418 is a glycosylation site (O-linked (GalNAc...) threonine; alternate). 3 LNR repeats span residues 1465-1505 (CELP…PWKN), 1506-1547 (CTQS…CNPL), and 1548-1587 (YDQYCKDHFSDGHCDQGCNSAECDWDGLDCADHVPERLAA). Ca(2+) contacts are provided by Asp1473, Asn1476, Asp1491, and Asp1494. Asn1505 carries an N-linked (GlcNAc...) asparagine glycan. N-linked (GlcNAc...) asparagine glycosylation is present at Asn1603. Thr1731 is a glycosylation site (O-linked (GalNAc...) threonine). Residues 1734–1766 (PPLPSQLHLMYLAAAAFVLLFFVGCGVLLSRKR) form an interaction with PSEN1 region. Residues 1742–1762 (LMYLAAAAFVLLFFVGCGVLL) form a helical membrane-spanning segment. Over 1763–2527 (SRKRRRQHGQ…QITHIPEAFK (765 aa)) the chain is Cytoplasmic. Lys1765 is covalently cross-linked (Glycyl lysine isopeptide (Lys-Gly) (interchain with G-Cter in ubiquitin)). The tract at residues 1786 to 1814 (KKKRREPLGEDSVGLKPLKNASDGALMDD) is disordered. Thr1867 is modified (phosphothreonine). ANK repeat units follow at residues 1933 to 1962 (TGETALHLAARYSRSDAAKRLLEASADANI), 1966 to 1996 (MGRTPLHAAVSADAQGVFQILLRNRATDLDA), 2000 to 2029 (DGTTPLILAARLAVEGMLEDLINSHADVNA), 2033 to 2062 (LGKSALHWAAAVNNVDAAVVLLKNGANKDM), and 2066 to 2095 (KEETPLFLAAREGSYETAKVLLDHFANRDI). An HIF1AN-binding region spans residues 1953-1961 (LLEASADAN). Position 1961 is a (3S)-3-hydroxyasparagine; by HIF1AN; partial (Asn1961). The interval 2020–2028 (LINSHADVN) is HIF1AN-binding. Position 2028 is a (3S)-3-hydroxyasparagine; by HIF1AN (Asn2028). Disordered regions lie at residues 2157 to 2201 (SATQ…DSSS), 2378 to 2424 (QPQN…SLPV), and 2436 to 2527 (PTSL…EAFK). Over residues 2378 to 2391 (QPQNLQPPSQPHLS) the composition is skewed to low complexity. The span at 2436–2474 (PTSLPSSMVPPMTTTQFLTPPSQHSYSSSPVDNTPSHQL) shows a compositional bias: polar residues. Low complexity predominate over residues 2484 to 2499 (PSPESPDQWSSSSPHS). Polar residues predominate over residues 2500-2520 (NISDWSEGISSPPTSMPSQIT).

Belongs to the NOTCH family. In terms of assembly, heterodimer of a C-terminal fragment N(TM) and an N-terminal fragment N(EC) which are probably linked by disulfide bonds. Interacts with DNER, DTX1, DTX2 and RBPJ/RBPSUH. Also interacts with MAML1, MAML2 and MAML3 which act as transcriptional coactivators for NOTCH1. Notch 1 intracellular domain interacts with SNW1; the interaction involves multimerized NOTCH1 NICD and is implicated in a formation of an intermediate preactivation complex which associates with DNA-bound CBF-1/RBPJ. The activated membrane-bound form interacts with AAK1 which promotes NOTCH1 stabilization. Forms a trimeric complex with FBXW7 and SGK1. Interacts with HIF1AN. HIF1AN negatively regulates the function of notch intracellular domain (NICD), accelerating myogenic differentiation. Interacts (via NICD) with SNAI1 (via zinc fingers); the interaction induces SNAI1 degradation via MDM2-mediated ubiquitination and inhibits SNAI1-induced cell invasion. Interacts (via NICD) with MDM2A. Interacts (via NICD) with BCL6; the interaction decreases MAML1 recruitment by NOTCH1 NICD on target genes DNA and inhibits NOTCH1 transactivation activity. Interacts with THBS4. Interacts (via the EGF-like repeat region) with CCN3 (via CTCK domain). Interacts (via EGF-like domains) with DLL4 (via N-terminal DSL and MNNL domains). Interacts with ZMIZ1. Interacts (via NICD domain) with MEGF10 (via the cytoplasmic domain). Interacts with DLL1 and JAG1. Interacts (via NICD domain) with PRAG1. Forms a complex with PRAG1, N1ICD and MAML1, in a MAML1-dependent manner. Interacts (via transmembrane region) with PSEN1; the interaction is direct. Interacts with ZFP64. Post-translationally, synthesized in the endoplasmic reticulum as an inactive form which is proteolytically cleaved by a furin-like convertase in the trans-Golgi network before it reaches the plasma membrane to yield an active, ligand-accessible form. Cleavage results in a C-terminal fragment N(TM) and a N-terminal fragment N(EC). Following ligand binding, it is cleaved by ADAM17 to yield a membrane-associated intermediate fragment called notch extracellular truncation (NEXT). Following endocytosis, this fragment is then cleaved by one of the catalytic subunits of gamma-secretase (PSEN1 or PSEN2) to release a Notch-derived peptide containing the intracellular domain (NICD) from the membrane. In terms of processing, phosphorylated. O-linked glycosylation by GALNT11 is involved in determination of left/right symmetry: glycosylation promotes activation of NOTCH1, possibly by promoting cleavage by ADAM17, modulating the balance between motile and immotile (sensory) cilia at the left-right organiser (LRO). O-glycosylated on the EGF-like domains. O-glucosylated at Ser-451 by KDELC1 and KDELC2. Contains both O-linked fucose and O-linked glucose in the EGF-like domains 11, 12 and 13, which are interacting with the residues on DLL4. MFNG-, RFNG- and LFNG-mediated modification of O-fucose residues at specific EGF-like domains results in inhibition of its activation by JAG1 and enhancement of its activation by DLL1 via an increased binding to DLL1. Post-translationally, ubiquitinated. Undergoes 'Lys-29'-linked polyubiquitination by ITCH; promotes the lysosomal degradation of non-activated internalized NOTCH1. Deubiquitination by USP12 is required for transport of internalized non-activated receptor from late endosomes to lysosomes for degradation. Monoubiquitination at Lys-1765 is required for activation by gamma-secretase cleavage, it promotes interaction with AAK1, which stabilizes it. Deubiquitination by EIF3F is necessary for nuclear import of activated Notch. In terms of processing, hydroxylated at Asn-1961 by HIF1AN. Hydroxylated at Asn-2028 by HIF1AN. Hydroxylation reduces affinity for HI1AN and may thus indirectly modulate negative regulation of NICD.

It is found in the cell membrane. The protein localises to the late endosome membrane. The protein resides in the nucleus. Functions as a receptor for membrane-bound ligands Jagged-1 (JAG1), Jagged-2 (JAG2) and Delta-1 (DLL1) to regulate cell-fate determination. Upon ligand activation through the released notch intracellular domain (NICD) it forms a transcriptional activator complex with RBPJ/RBPSUH and activates genes of the enhancer of split locus. Affects the implementation of differentiation, proliferation and apoptotic programs. Involved in angiogenesis; negatively regulates endothelial cell proliferation and migration and angiogenic sprouting. Involved in the maturation of both CD4(+) and CD8(+) cells in the thymus. Important for follicular differentiation and possibly cell fate selection within the follicle. During cerebellar development, functions as a receptor for neuronal DNER and is involved in the differentiation of Bergmann glia. Represses neuronal and myogenic differentiation. May play an essential role in postimplantation development, probably in some aspect of cell specification and/or differentiation. May be involved in mesoderm development, somite formation and neurogenesis. May enhance HIF1A function by sequestering HIF1AN away from HIF1A. Required for the THBS4 function in regulating protective astrogenesis from the subventricular zone (SVZ) niche after injury. Involved in determination of left/right symmetry by modulating the balance between motile and immotile (sensory) cilia at the left-right organiser (LRO). The protein is Neurogenic locus notch homolog protein 1 (NOTCH1) of Cricetulus griseus (Chinese hamster).